Consider the following 119-residue polypeptide: Protein YdaY (119 aa).

This chain is Protein YdaY (ydaY), found in Escherichia coli (strain K12).